The chain runs to 316 residues: 2,3-dihydroxyphenylpropionate/2,3-dihydroxicinnamic acid 1,2-dioxygenase (316 aa).

H115 functions as the Proton donor in the catalytic mechanism. Catalysis depends on H179, which acts as the Proton acceptor.

This sequence belongs to the LigB/MhpB extradiol dioxygenase family. Homotetramer. It depends on Fe(2+) as a cofactor.

The catalysed reaction is 3-(2,3-dihydroxyphenyl)propanoate + O2 = (2Z,4E)-2-hydroxy-6-oxonona-2,4-dienedioate + H(+). The enzyme catalyses (2E)-3-(2,3-dihydroxyphenyl)prop-2-enoate + O2 = (2Z,4E,7E)-2-hydroxy-6-oxonona-2,4,7-trienedioate + H(+). It functions in the pathway aromatic compound metabolism; 3-phenylpropanoate degradation. Catalyzes the non-heme iron(II)-dependent oxidative cleavage of 2,3-dihydroxyphenylpropionic acid and 2,3-dihydroxicinnamic acid into 2-hydroxy-6-ketononadienedioate and 2-hydroxy-6-ketononatrienedioate, respectively. This is 2,3-dihydroxyphenylpropionate/2,3-dihydroxicinnamic acid 1,2-dioxygenase from Paraburkholderia xenovorans (strain LB400).